Reading from the N-terminus, the 68-residue chain is Probable tautomerase jhp_0858 (68 aa).

Pro-2 acts as the Proton acceptor; via imino nitrogen in catalysis.

It belongs to the 4-oxalocrotonate tautomerase family.

The polypeptide is Probable tautomerase jhp_0858 (Helicobacter pylori (strain J99 / ATCC 700824) (Campylobacter pylori J99)).